The chain runs to 81 residues: Small ribosomal subunit protein bS16 (81 aa).

This sequence belongs to the bacterial ribosomal protein bS16 family.

In Clostridium botulinum (strain Eklund 17B / Type B), this protein is Small ribosomal subunit protein bS16.